We begin with the raw amino-acid sequence, 505 residues long: Histidine ammonia-lyase (505 aa).

The segment at residues 141-143 (ASG) is a cross-link (5-imidazolinone (Ala-Gly)). Serine 142 carries the 2,3-didehydroalanine (Ser) modification.

This sequence belongs to the PAL/histidase family. Post-translationally, contains an active site 4-methylidene-imidazol-5-one (MIO), which is formed autocatalytically by cyclization and dehydration of residues Ala-Ser-Gly.

It is found in the cytoplasm. The enzyme catalyses L-histidine = trans-urocanate + NH4(+). Its pathway is amino-acid degradation; L-histidine degradation into L-glutamate; N-formimidoyl-L-glutamate from L-histidine: step 1/3. This is Histidine ammonia-lyase from Bacillus thuringiensis subsp. konkukian (strain 97-27).